A 287-amino-acid polypeptide reads, in one-letter code: Nucleotide-binding protein VP2673 (287 aa).

Gly8–Ser15 contributes to the ATP binding site. Residue Asp56 to Asn59 coordinates GTP.

Belongs to the RapZ-like family.

Displays ATPase and GTPase activities. The sequence is that of Nucleotide-binding protein VP2673 from Vibrio parahaemolyticus serotype O3:K6 (strain RIMD 2210633).